A 346-amino-acid polypeptide reads, in one-letter code: Small ribosomal subunit biogenesis GTPase RsgA (346 aa).

The interval 1 to 26 is disordered; the sequence is MAKRKLTQNQTRRIQSNNAKTLHRHK. Polar residues predominate over residues 7–20; that stretch reads TQNQTRRIQSNNAK. Residues 103–271 enclose the CP-type G domain; sequence ENEISRPDYY…LIDSPGIREF (169 aa). GTP-binding positions include 159-162 and 213-221; these read NKVD and GQSGVGKSS. Residues Cys-295, Cys-300, His-302, and Cys-308 each contribute to the Zn(2+) site.

Belongs to the TRAFAC class YlqF/YawG GTPase family. RsgA subfamily. As to quaternary structure, monomer. Associates with 30S ribosomal subunit, binds 16S rRNA. Zn(2+) is required as a cofactor.

The protein localises to the cytoplasm. One of several proteins that assist in the late maturation steps of the functional core of the 30S ribosomal subunit. Helps release RbfA from mature subunits. May play a role in the assembly of ribosomal proteins into the subunit. Circularly permuted GTPase that catalyzes slow GTP hydrolysis, GTPase activity is stimulated by the 30S ribosomal subunit. The polypeptide is Small ribosomal subunit biogenesis GTPase RsgA (Haemophilus influenzae (strain PittGG)).